A 236-amino-acid chain; its full sequence is MLKYQQIATEIETYIEEHQLQQGDKLPVLETLMAQFEVSKSTITKSLELLEQKGAIFQVRGSGIFVRKHKRKGYISLLSNQGFKKDLEDFNVTSKVIELDVRKPTPEAAENLNIGMDEDIYYVKRVRYINGQTLCYEESYYTKSIVTYLNNEIVSHSIFHYIREGLGLKIGFSDLFLHVGQLNEEEAEYLGLEAGLPKLYIESIFHLTNGQPFDYSKISYNYEQSQFVVQANSFLL.

In terms of domain architecture, HTH gntR-type spans 1–69 (MLKYQQIATE…RGSGIFVRKH (69 aa)). The H-T-H motif DNA-binding region spans 29 to 48 (LETLMAQFEVSKSTITKSLE).

This is an uncharacterized protein from Bacillus subtilis (strain 168).